The chain runs to 357 residues: Carbamoyl phosphate synthase small chain (357 aa).

The CPSase stretch occupies residues 1 to 168 (MSKRLLILED…STATAYPSPN (168 aa)). The L-glutamine site is built by Ser46, Gly220, and Gly222. One can recognise a Glutamine amidotransferase type-1 domain in the interval 172–357 (KVVVVDFGLK…FMDLMDNFKK (186 aa)). Catalysis depends on Cys247, which acts as the Nucleophile. L-glutamine is bound by residues Leu248, Gln251, Asn289, Gly291, and Tyr292. Active-site residues include His331 and Asp333.

It belongs to the CarA family. In terms of assembly, composed of two chains; the small (or glutamine) chain promotes the hydrolysis of glutamine to ammonia, which is used by the large (or ammonia) chain to synthesize carbamoyl phosphate. Tetramer of heterodimers (alpha,beta)4.

It carries out the reaction hydrogencarbonate + L-glutamine + 2 ATP + H2O = carbamoyl phosphate + L-glutamate + 2 ADP + phosphate + 2 H(+). The enzyme catalyses L-glutamine + H2O = L-glutamate + NH4(+). The protein operates within amino-acid biosynthesis; L-arginine biosynthesis; carbamoyl phosphate from bicarbonate: step 1/1. Its pathway is pyrimidine metabolism; UMP biosynthesis via de novo pathway; (S)-dihydroorotate from bicarbonate: step 1/3. Functionally, small subunit of the glutamine-dependent carbamoyl phosphate synthetase (CPSase). CPSase catalyzes the formation of carbamoyl phosphate from the ammonia moiety of glutamine, carbonate, and phosphate donated by ATP, constituting the first step of 2 biosynthetic pathways, one leading to arginine and/or urea and the other to pyrimidine nucleotides. The small subunit (glutamine amidotransferase) binds and cleaves glutamine to supply the large subunit with the substrate ammonia. This is Carbamoyl phosphate synthase small chain from Lactococcus lactis subsp. cremoris (strain MG1363).